The sequence spans 107 residues: High mobility group protein HMG-I/HMG-Y (107 aa).

Residues 1–13 are compositionally biased toward polar residues; sequence MSESVSKSSQPLA. Residues 1 to 107 form a disordered region; that stretch reads MSESVSKSSQ…ISQESSEEEQ (107 aa). An N-acetylserine modification is found at serine 2. Lysine 7 is subject to N6-acetyllysine. An ADP-ribosylserine modification is found at serine 8. Residue serine 9 is modified to ADP-ribosylserine; alternate. Residue serine 9 is modified to Phosphoserine; alternate. An N6-acetyllysine; alternate modification is found at lysine 15. Lysine 15 is covalently cross-linked (Glycyl lysine isopeptide (Lys-Gly) (interchain with G-Cter in SUMO2); alternate). The span at 15-24 shows a compositional bias: basic and acidic residues; sequence KQEKDGTEKR. Positions 21 to 31 form a DNA-binding region, a.T hook 1; it reads TEKRGRGRPRK. At arginine 26 the chain carries Asymmetric dimethylarginine; alternate. Residue arginine 26 is modified to Omega-N-methylarginine; alternate. Arginine 26 is subject to Symmetric dimethylarginine; alternate. Residue serine 36 is modified to Phosphoserine; by HIPK2 and CDC2. Phosphothreonine is present on threonine 39. 2 positions are modified to phosphoserine: serine 44 and serine 49. Phosphothreonine; by HIPK2 and CDC2 is present on threonine 53. DNA-binding regions (a.T hook) lie at residues 53–63 and 78–89; these read TPKRPRGRPKG and TPGRKPRGRPKK. An interaction with HIPK2 region spans residues 53-77; the sequence is TPKRPRGRPKGSKNKGTAKTRKVTT. The span at 55-74 shows a compositional bias: basic residues; that stretch reads KRPRGRPKGSKNKGTAKTRK. An asymmetric dimethylarginine; by PRMT6; alternate mark is found at arginine 58 and arginine 60. Residues arginine 58 and arginine 60 each carry the omega-N-methylarginine; by PRMT6; alternate modification. Threonine 78 carries the post-translational modification Phosphothreonine; by HIPK2 and CDC2. Acidic residues predominate over residues 93 to 107; it reads EEEEGISQESSEEEQ. Phosphoserine occurs at positions 99, 102, and 103.

This sequence belongs to the HMGA family. As to quaternary structure, interacts with HIPK2. Isoforms HMG-I and HMG-Y can be phosphorylated by HIPK2. Phosphorylation may modulate DNA-binding affinity. In terms of processing, methylation at Arg-58 is mutually exclusive with methylation at Arg-60.

Its subcellular location is the nucleus. It localises to the chromosome. HMG-I/Y bind preferentially to the minor groove of A+T rich regions in double-stranded DNA. It is suggested that these proteins could function in nucleosome phasing and in the 3'-end processing of mRNA transcripts. They are also involved in the transcription regulation of genes containing, or in close proximity to A+T-rich regions. This Rattus norvegicus (Rat) protein is High mobility group protein HMG-I/HMG-Y (Hmga1).